The sequence spans 164 residues: Ubiquitin-fold modifier-conjugating enzyme 1 (164 aa).

Cysteine 116 serves as the catalytic Glycyl thioester intermediate.

Belongs to the ubiquitin-conjugating enzyme family. UFC1 subfamily.

Its function is as follows. E2-like enzyme which forms an intermediate with UFM1 via a thioester linkage. The protein is Ubiquitin-fold modifier-conjugating enzyme 1 of Drosophila erecta (Fruit fly).